Here is a 201-residue protein sequence, read N- to C-terminus: ATP-dependent Clp protease proteolytic subunit (201 aa).

Residue S103 is the Nucleophile of the active site. H128 is a catalytic residue.

The protein belongs to the peptidase S14 family. As to quaternary structure, fourteen ClpP subunits assemble into 2 heptameric rings which stack back to back to give a disk-like structure with a central cavity, resembling the structure of eukaryotic proteasomes.

It localises to the cytoplasm. The catalysed reaction is Hydrolysis of proteins to small peptides in the presence of ATP and magnesium. alpha-casein is the usual test substrate. In the absence of ATP, only oligopeptides shorter than five residues are hydrolyzed (such as succinyl-Leu-Tyr-|-NHMec, and Leu-Tyr-Leu-|-Tyr-Trp, in which cleavage of the -Tyr-|-Leu- and -Tyr-|-Trp bonds also occurs).. Cleaves peptides in various proteins in a process that requires ATP hydrolysis. Has a chymotrypsin-like activity. Plays a major role in the degradation of misfolded proteins. In Bordetella avium (strain 197N), this protein is ATP-dependent Clp protease proteolytic subunit.